A 199-amino-acid chain; its full sequence is Peptidyl-prolyl cis-trans isomerase CYP22 (199 aa).

Residues 35–198 (FFDVSIGGIP…LAVVITECGE (164 aa)) form the PPIase cyclophilin-type domain.

Belongs to the cyclophilin-type PPIase family. In terms of tissue distribution, ubiquitous.

It catalyses the reaction [protein]-peptidylproline (omega=180) = [protein]-peptidylproline (omega=0). PPIases accelerate the folding of proteins. It catalyzes the cis-trans isomerization of proline imidic peptide bonds in oligopeptides. The polypeptide is Peptidyl-prolyl cis-trans isomerase CYP22 (CYP22) (Arabidopsis thaliana (Mouse-ear cress)).